We begin with the raw amino-acid sequence, 472 residues long: Pentatricopeptide repeat-containing protein At3g18970 (472 aa).

PPR repeat units follow at residues 107 to 139 (NERT…MVKK), 146 to 180 (SELI…TSVT), 181 to 216 (WNAM…GSGV), 219 to 253 (TDTT…GFTP), 256 to 286 (DVFI…MKVK), 287 to 321 (NVFT…GIKP), 322 to 352 (NEIT…MKTR), and 358 to 388 (VIEH…MPIK). Residues 393–472 (LLRSLCNACS…IKTRPGYSFV (80 aa)) form a type E motif; degenerate region.

This sequence belongs to the PPR family. PCMP-E subfamily.

This is Pentatricopeptide repeat-containing protein At3g18970 (PCMP-E93) from Arabidopsis thaliana (Mouse-ear cress).